A 54-amino-acid polypeptide reads, in one-letter code: MSPQTETKASVGFKAGVKDYKLTYYTPEYETKDTDILAAFRVTPQPGVPPEEAG.

A propeptide spanning residues Met-1–Ser-2 is cleaved from the precursor. Residue Pro-3 is modified to N-acetylproline. Lys-14 is modified (N6,N6,N6-trimethyllysine).

This sequence belongs to the RuBisCO large chain family. Type I subfamily. In terms of assembly, heterohexadecamer of 8 large chains and 8 small chains.

It localises to the plastid. It is found in the chloroplast. The catalysed reaction is 2 (2R)-3-phosphoglycerate + 2 H(+) = D-ribulose 1,5-bisphosphate + CO2 + H2O. The enzyme catalyses D-ribulose 1,5-bisphosphate + O2 = 2-phosphoglycolate + (2R)-3-phosphoglycerate + 2 H(+). RuBisCO catalyzes two reactions: the carboxylation of D-ribulose 1,5-bisphosphate, the primary event in carbon dioxide fixation, as well as the oxidative fragmentation of the pentose substrate in the photorespiration process. Both reactions occur simultaneously and in competition at the same active site. This Rhamnus cathartica (Common buckthorn) protein is Ribulose bisphosphate carboxylase large chain (rbcL).